The sequence spans 131 residues: Profilin-1 (131 aa).

The protein belongs to the profilin family. In terms of assembly, occurs in many kinds of cells as a complex with monomeric actin in a 1:1 ratio. As to expression, expressed at low levels roots, leaves, stems, flowers and siliques. Expressed in leaf epidermal cells, trichomes and stem epidermal cells. Detected in phloem exudates (at protein level).

Its subcellular location is the cytoplasm. It localises to the cytoskeleton. Binds to actin monomers and regulates the organization of the actin cytoskeleton. At high concentrations, profilin prevents the polymerization of actin, whereas it enhances it at low concentrations. At low concentrations, associates with the poly-proline motif of formins to enhance actin filament elongation rate. Binds ACT1, ACT7 and ACT11 and inhibits actin polymerization. Coordinates the stochastic dynamic properties of actin filaments by modulating formin-mediated actin nucleation and assembly during axial cell expansion. Binds G-actin and poly-L-proline in vitro. Inhibits cell growth of various pathogenic fungal strains. May play a role as antifungal proteins in the defense system against fungal pathogen attacks. This Arabidopsis thaliana (Mouse-ear cress) protein is Profilin-1.